A 571-amino-acid polypeptide reads, in one-letter code: Coiled-coil domain-containing protein 22 homolog (571 aa).

2 coiled-coil regions span residues M406 to A434 and C509 to R571.

This sequence belongs to the CCDC22 family.

The protein is Coiled-coil domain-containing protein 22 homolog of Culex quinquefasciatus (Southern house mosquito).